An 872-amino-acid polypeptide reads, in one-letter code: DNA mismatch repair protein MutS (872 aa).

ATP is bound at residue Gly626–Ser633.

This sequence belongs to the DNA mismatch repair MutS family.

Its function is as follows. This protein is involved in the repair of mismatches in DNA. It is possible that it carries out the mismatch recognition step. This protein has a weak ATPase activity. The sequence is that of DNA mismatch repair protein MutS from Chlorobium phaeobacteroides (strain DSM 266 / SMG 266 / 2430).